The following is a 92-amino-acid chain: Small ribosomal subunit protein uS19c (92 aa).

It belongs to the universal ribosomal protein uS19 family.

It localises to the plastid. Protein S19 forms a complex with S13 that binds strongly to the 16S ribosomal RNA. The polypeptide is Small ribosomal subunit protein uS19c (Cuscuta gronovii (Common dodder)).